Here is a 23-residue protein sequence, read N- to C-terminus: GFRDVLKGAAKAFVKTVAGHIAN.

Asparagine 23 is modified (asparagine amide).

Expressed by the skin glands.

Its subcellular location is the secreted. Functionally, antimicrobial peptide that shows higher potency against Gram-negative bacteria than against Gram-positive bacteria. Has a very week hemolytic activity. This chain is Ascaphin-1, found in Ascaphus truei (Coastal tailed frog).